The sequence spans 226 residues: Cobalt transport protein CbiM 1 (226 aa).

Helical transmembrane passes span 6-26 (GFLP…VVAY), 43-63 (MLLG…MPSV), 75-95 (LGAI…VLLF), 107-127 (TLGA…AAVF), 135-155 (FPFG…TYVT), and 181-201 (VFAL…VVVM).

The protein belongs to the CbiM family. As to quaternary structure, forms an energy-coupling factor (ECF) transporter complex composed of an ATP-binding protein (A component, CbiO), a transmembrane protein (T component, CbiQ) and 2 possible substrate-capture proteins (S components, CbiM and CbiN) of unknown stoichimetry.

The protein localises to the cell inner membrane. It participates in cofactor biosynthesis; adenosylcobalamin biosynthesis. In terms of biological role, part of the energy-coupling factor (ECF) transporter complex CbiMNOQ involved in cobalt import. The sequence is that of Cobalt transport protein CbiM 1 (cbim1) from Pelobacter propionicus (strain DSM 2379 / NBRC 103807 / OttBd1).